The primary structure comprises 451 residues: PTS system cellobiose-specific EIIC component (451 aa).

One can recognise a PTS EIIC type-3 domain in the interval 8–423; it reads LEDRVMPVAG…FIAFAIYYPF (416 aa). The next 10 helical transmembrane spans lie at 31-51, 72-92, 104-124, 138-158, 187-207, 227-247, 250-270, 293-313, 347-367, and 407-427; these read GIIL…VGFL, LLYP…FGVA, LSAG…QVPF, GIPV…LAIV, FVAL…RLIL, LSVL…VQLL, TGLH…LSLM, FFDL…ALTM, IVMN…LVVV, and ILQI…FSIW.

The protein resides in the cell membrane. Functionally, the phosphoenolpyruvate-dependent sugar phosphotransferase system (sugar PTS), a major carbohydrate active transport system, catalyzes the phosphorylation of incoming sugar substrates concomitantly with their translocation across the cell membrane. The enzyme II CelABD PTS system is involved in cellobiose transport. The protein is PTS system cellobiose-specific EIIC component of Geobacillus stearothermophilus (Bacillus stearothermophilus).